A 285-amino-acid polypeptide reads, in one-letter code: Transcription factor LBX1 (285 aa).

Basic and acidic residues predominate over residues 1-20 (MTSKEDGKAAPGEERRRSPL). Residues 1-36 (MTSKEDGKAAPGEERRRSPLDHLPPPANSNKPLTPF) form a disordered region. The segment at residues 125–184 (RRKSRTAFTNHQIYELEKRFLYQKYLSPADRDQIAQQLGLTNAQVITWFQNRRAKLKRDL) is a DNA-binding region (homeobox). The segment at 212–285 (EQNSEASGGG…EEDEEIDVDD (74 aa)) is disordered. Residues 218-230 (SGGGGGGGGGGCG) show a composition bias toward gly residues. Residues 272–285 (CSEDEEDEEIDVDD) show a composition bias toward acidic residues.

In terms of assembly, interacts with SKOR1 which acts as a transcriptional corepressor.

It is found in the nucleus. Transcription factor required for the development of GABAergic interneurons in the dorsal horn of the spinal cord and migration and further development of hypaxial muscle precursor cells for limb muscles, diaphragm and hypoglossal cord. This is Transcription factor LBX1 from Rattus norvegicus (Rat).